Reading from the N-terminus, the 677-residue chain is Methionine--tRNA ligase (677 aa).

A 'HIGH' region motif is present at residues 15–25 (PYANGSIHLGH). The Zn(2+) site is built by Cys-146, Cys-149, Cys-159, and Cys-162. The short motif at 333 to 337 (KMSKS) is the 'KMSKS' region element. Residue Lys-336 participates in ATP binding. The tRNA-binding domain occupies 575-677 (DFAKVDLRVA…AGAKPGHQVK (103 aa)).

It belongs to the class-I aminoacyl-tRNA synthetase family. MetG type 1 subfamily. Homodimer. It depends on Zn(2+) as a cofactor.

The protein localises to the cytoplasm. It catalyses the reaction tRNA(Met) + L-methionine + ATP = L-methionyl-tRNA(Met) + AMP + diphosphate. In terms of biological role, is required not only for elongation of protein synthesis but also for the initiation of all mRNA translation through initiator tRNA(fMet) aminoacylation. This chain is Methionine--tRNA ligase, found in Escherichia coli O157:H7.